A 1892-amino-acid chain; its full sequence is Kinesin-like protein KIN-12E (1892 aa).

The disordered stretch occupies residues 1–28; it reads MAGHGAGGRRASTSRAAARRVEAETNEN. The 338-residue stretch at 64-401 folds into the Kinesin motor domain; it reads NVQVLIRIRP…LKFAQRAKLI (338 aa). 145–152 serves as a coordination point for ATP; sequence GQTGSGKT. Coiled coils occupy residues 406–438, 486–526, 1066–1139, 1303–1357, and 1396–1528; these read KVNE…QQNM, SLRR…TTVK, LFSN…LHEQ, KLLQ…LAEN, and ISET…SYQI. The segment covering 1633-1649 has biased composition (basic and acidic residues); that stretch reads LHESNSDTGHTKFEKPS. Positions 1633 to 1656 are disordered; the sequence is LHESNSDTGHTKFEKPSGRTRGSG. Residues 1780–1841 are a coiled coil; that stretch reads MDQRKADLLE…LVGSNQAIAE (62 aa). Positions 1870–1892 are disordered; sequence HARHEHSRLQAAKSSRTRRGSHQ.

It belongs to the TRAFAC class myosin-kinesin ATPase superfamily. Kinesin family. KIN-12 subfamily.

This chain is Kinesin-like protein KIN-12E, found in Oryza sativa subsp. japonica (Rice).